A 106-amino-acid polypeptide reads, in one-letter code: Large ribosomal subunit protein uL24 (106 aa).

The protein belongs to the universal ribosomal protein uL24 family. Part of the 50S ribosomal subunit.

In terms of biological role, one of two assembly initiator proteins, it binds directly to the 5'-end of the 23S rRNA, where it nucleates assembly of the 50S subunit. One of the proteins that surrounds the polypeptide exit tunnel on the outside of the subunit. The protein is Large ribosomal subunit protein uL24 of Bordetella petrii (strain ATCC BAA-461 / DSM 12804 / CCUG 43448).